The sequence spans 374 residues: 5-hydroxytryptamine receptor 1D (374 aa).

Residues Asn5, Asn17, and Asn21 are each glycosylated (N-linked (GlcNAc...) asparagine). 3 consecutive transmembrane segments (helical) span residues 36-61 (ISLV…TTIL), 73-94 (LIGS…ISIA), and 107-131 (LCDI…VIAL). A disulfide bridge connects residues Cys108 and Cys185. Residues Asp115 and Cys119 each coordinate serotonin. The DRY motif; important for ligand-induced conformation changes signature appears at 132-134 (DRY). A run of 4 helical transmembrane segments spans residues 152 to 173 (AAAM…PLFW), 192 to 215 (ISYT…ILYG), 298 to 323 (KTLG…VLPI), and 333 to 356 (ALFD…YTVF). Ser318 contributes to the serotonin binding site. The NPxxY motif; important for ligand-induced conformation changes and signaling motif lies at 349-353 (NPVIY).

The protein belongs to the G-protein coupled receptor 1 family. In terms of assembly, homodimer. Heterodimer with HTR1B. In terms of tissue distribution, detected in dorsal raphe.

The protein resides in the cell membrane. Its function is as follows. G-protein coupled receptor for 5-hydroxytryptamine (serotonin). Also functions as a receptor for ergot alkaloid derivatives, various anxiolytic and antidepressant drugs and other psychoactive substances. Ligand binding causes a conformation change that triggers signaling via guanine nucleotide-binding proteins (G proteins) and modulates the activity of downstream effectors, such as adenylate cyclase. HTR1D is coupled to G(i)/G(o) G alpha proteins and mediates inhibitory neurotransmission by inhibiting adenylate cyclase activity. Regulates the release of 5-hydroxytryptamine in the brain, and thereby affects neural activity. May also play a role in regulating the release of other neurotransmitters. May play a role in vasoconstriction. This is 5-hydroxytryptamine receptor 1D (Htr1d) from Rattus norvegicus (Rat).